The following is a 450-amino-acid chain: MAEYSGKHVVVVGAGCTGLGLARFFLDRGALVTLSDSRSREELVDVAELADHGLRFDCGGHDAALLAGADLIAISPGIPLTVPAVAGALQAGVPVQGEIEIAARELSAPMVAITGTNGKSTTTCLMGEIMRCWGRRAFVGGNLGTPLIEATRSTDWDWIVAEISSFQLEAIDTFRPRYGMLLNLTADHLDRYAGMGEYVAAKLRLFENMTAEDVAVVNADDALVVRSTTDLPCRKIPFSSSRVLDEGMGFDGQHIVWRHAGRQERFDVADLQLKGLHNVENVMAALIPPLMEGCPTDIAWKAVCGFSGLDHRMVLVREIDGVSWYDDSKGTNVGSVVKSLAGLQGPVTLIAGGKDKGGDYAPLAGLIGEKVEHLILIGQAADRMQAAFQGMTTILRADSLEAAVQQAQQVTMAGGTVLLSPGCSSFDMFRSYAERGEVFCRAVQALQGNG.

115 to 121 (GTNGKST) contacts ATP.

This sequence belongs to the MurCDEF family.

It localises to the cytoplasm. It carries out the reaction UDP-N-acetyl-alpha-D-muramoyl-L-alanine + D-glutamate + ATP = UDP-N-acetyl-alpha-D-muramoyl-L-alanyl-D-glutamate + ADP + phosphate + H(+). It participates in cell wall biogenesis; peptidoglycan biosynthesis. Its function is as follows. Cell wall formation. Catalyzes the addition of glutamate to the nucleotide precursor UDP-N-acetylmuramoyl-L-alanine (UMA). The chain is UDP-N-acetylmuramoylalanine--D-glutamate ligase from Syntrophotalea carbinolica (strain DSM 2380 / NBRC 103641 / GraBd1) (Pelobacter carbinolicus).